The following is a 298-amino-acid chain: Max-like protein X (298 aa).

Positions 1 to 63 (MTEPGASPED…ARGCREDSSH (63 aa)) are disordered. At Ser7 the chain carries Phosphoserine. Residues 28–37 (GRARARRGSG) are compositionally biased toward basic residues. Phosphoserine is present on residues Ser45, Ser48, Ser74, Ser77, and Ser98. Residues 98–109 (SIGSTSASSVPN) are compositionally biased toward polar residues. The interval 98-119 (SIGSTSASSVPNTDDEDSDYQQ) is disordered. The bHLH domain maps to 129-187 (RRRRAHTQAEQKRRDAIKRGYDDLQTIVPTCQQQDFSIGSQKLSKAIVLQKTIDYIQFL). Positions 194 to 214 (QEEEVSTLRKDVTALKIMKVN) are leucine-zipper.

In terms of assembly, efficient DNA binding requires dimerization with another bHLH protein. Binds DNA as a heterodimer with MAD1, MAD4, MNT, WBSCR14 and MLXIP. Can also bind DNA as a homodimer. As to expression, expressed in all tissues examined: stomach, duodenum, jejunum, ileum, colon, liver, pancreas, salivary gland, kidney, spleen, lung, heart, skeletal muscle, brain, ovary and testis.

It localises to the cytoplasm. The protein localises to the nucleus. Transcription regulator. Forms a sequence-specific DNA-binding protein complex with MAD1, MAD4, MNT, WBSCR14 and MLXIP which recognizes the core sequence 5'-CACGTG-3'. The TCFL4-MAD1, TCFL4-MAD4, TCFL4-WBSCR14 complexes are transcriptional repressors. Plays a role in transcriptional activation of glycolytic target genes. Involved in glucose-responsive gene regulation. The protein is Max-like protein X (Mlx) of Mus musculus (Mouse).